The chain runs to 347 residues: Protein-glutamate methylesterase/protein-glutamine glutaminase 4 (347 aa).

One can recognise a Response regulatory domain in the interval 3 to 121 (KVLIVDDSAS…HPNHEREARS (119 aa)). D54 bears the 4-aspartylphosphate mark. Positions 157-342 (PARLKAVAIG…PDRIVTALTS (186 aa)) constitute a CheB-type methylesterase domain. Residues S168, H195, and D289 contribute to the active site.

This sequence belongs to the CheB family. In terms of processing, phosphorylated by CheA. Phosphorylation of the N-terminal regulatory domain activates the methylesterase activity.

The protein localises to the cytoplasm. The enzyme catalyses [protein]-L-glutamate 5-O-methyl ester + H2O = L-glutamyl-[protein] + methanol + H(+). It carries out the reaction L-glutaminyl-[protein] + H2O = L-glutamyl-[protein] + NH4(+). Its function is as follows. Involved in chemotaxis. Part of a chemotaxis signal transduction system that modulates chemotaxis in response to various stimuli. Catalyzes the demethylation of specific methylglutamate residues introduced into the chemoreceptors (methyl-accepting chemotaxis proteins or MCP) by CheR. Also mediates the irreversible deamidation of specific glutamine residues to glutamic acid. The sequence is that of Protein-glutamate methylesterase/protein-glutamine glutaminase 4 from Geobacter metallireducens (strain ATCC 53774 / DSM 7210 / GS-15).